The sequence spans 287 residues: ADP-dependent (S)-NAD(P)H-hydrate dehydratase (287 aa).

The 277-residue stretch at 7–283 (GEDDVRKFVP…ELLPSVMKPF (277 aa)) folds into the YjeF C-terminal domain. Positions 42 and 159 each coordinate (6S)-NADPHX. AMP-binding positions include 196-200 (KGPTD) and G224. A (6S)-NADPHX-binding site is contributed by D225.

The protein belongs to the NnrD/CARKD family. In terms of assembly, homotetramer. Mg(2+) serves as cofactor.

It carries out the reaction (6S)-NADHX + ADP = AMP + phosphate + NADH + H(+). The enzyme catalyses (6S)-NADPHX + ADP = AMP + phosphate + NADPH + H(+). Functionally, catalyzes the dehydration of the S-form of NAD(P)HX at the expense of ADP, which is converted to AMP. Together with NAD(P)HX epimerase, which catalyzes the epimerization of the S- and R-forms, the enzyme allows the repair of both epimers of NAD(P)HX, a damaged form of NAD(P)H that is a result of enzymatic or heat-dependent hydration. The protein is ADP-dependent (S)-NAD(P)H-hydrate dehydratase of Cenarchaeum symbiosum (strain A).